The primary structure comprises 200 residues: 3-isopropylmalate dehydratase small subunit (200 aa).

Belongs to the LeuD family. LeuD type 1 subfamily. Heterodimer of LeuC and LeuD.

The enzyme catalyses (2R,3S)-3-isopropylmalate = (2S)-2-isopropylmalate. It participates in amino-acid biosynthesis; L-leucine biosynthesis; L-leucine from 3-methyl-2-oxobutanoate: step 2/4. Catalyzes the isomerization between 2-isopropylmalate and 3-isopropylmalate, via the formation of 2-isopropylmaleate. In Vibrio parahaemolyticus serotype O3:K6 (strain RIMD 2210633), this protein is 3-isopropylmalate dehydratase small subunit.